Reading from the N-terminus, the 502-residue chain is AMP phosphorylase (502 aa).

Residues Gly-168, 195-200 (SRAITS), and Thr-204 each bind AMP. Asp-257 serves as the catalytic Proton donor. The AMP site is built by Ser-265 and Lys-289.

The protein belongs to the thymidine/pyrimidine-nucleoside phosphorylase family. Type 2 subfamily.

The catalysed reaction is AMP + phosphate = alpha-D-ribose 1,5-bisphosphate + adenine. The enzyme catalyses CMP + phosphate = cytosine + alpha-D-ribose 1,5-bisphosphate. It carries out the reaction UMP + phosphate = alpha-D-ribose 1,5-bisphosphate + uracil. Its function is as follows. Catalyzes the conversion of AMP and phosphate to adenine and ribose 1,5-bisphosphate (R15P). Exhibits phosphorylase activity toward CMP and UMP in addition to AMP. Functions in an archaeal AMP degradation pathway, together with R15P isomerase and RubisCO. In Hyperthermus butylicus (strain DSM 5456 / JCM 9403 / PLM1-5), this protein is AMP phosphorylase.